Consider the following 78-residue polypeptide: MPKRILQGTVVSDKNDKTVVVRVERRFAHPILQKTVRRSKKYKAHDENNQFKVGDLVSIEECAPISKDKRWTVVSAQS.

The protein belongs to the universal ribosomal protein uS17 family. In terms of assembly, part of the 30S ribosomal subunit.

Functionally, one of the primary rRNA binding proteins, it binds specifically to the 5'-end of 16S ribosomal RNA. This is Small ribosomal subunit protein uS17 from Rhizobium meliloti (strain 1021) (Ensifer meliloti).